The chain runs to 459 residues: Ribulose bisphosphate carboxylase large chain (459 aa).

The residue at position 4 (K4) is an N6,N6,N6-trimethyllysine. Substrate is bound by residues N113 and T163. K165 functions as the Proton acceptor in the catalytic mechanism. Substrate is bound at residue K167. Mg(2+) is bound by residues K191, D193, and E194. N6-carboxylysine is present on K191. Residue H284 is the Proton acceptor of the active site. Substrate-binding residues include R285, H317, and S369.

This sequence belongs to the RuBisCO large chain family. Type I subfamily. In terms of assembly, heterohexadecamer of 8 large chains and 8 small chains; disulfide-linked. The disulfide link is formed within the large subunit homodimers. Mg(2+) serves as cofactor. In terms of processing, the disulfide bond which can form in the large chain dimeric partners within the hexadecamer appears to be associated with oxidative stress and protein turnover.

It localises to the plastid. Its subcellular location is the chloroplast. It carries out the reaction 2 (2R)-3-phosphoglycerate + 2 H(+) = D-ribulose 1,5-bisphosphate + CO2 + H2O. The enzyme catalyses D-ribulose 1,5-bisphosphate + O2 = 2-phosphoglycolate + (2R)-3-phosphoglycerate + 2 H(+). Its function is as follows. RuBisCO catalyzes two reactions: the carboxylation of D-ribulose 1,5-bisphosphate, the primary event in carbon dioxide fixation, as well as the oxidative fragmentation of the pentose substrate in the photorespiration process. Both reactions occur simultaneously and in competition at the same active site. The sequence is that of Ribulose bisphosphate carboxylase large chain from Micranthes integrifolia (Wholeleaf saxifrage).